The sequence spans 34 residues: Trypsin inhibitor 2 (34 aa).

Positions 1 to 34 (SGSDGGVCPKILKKCRRDSDCPGACICRGNGYCG) form a cross-link, cyclopeptide (Ser-Gly). Residues 4–5 (DG) constitute a cross-link ((2-aminosuccinimidyl)acetic acid (Asp-Gly); alternate). The isoaspartyl glycine isopeptide (Asp-Gly); alternate cross-link spans 4–5 (DG). Intrachain disulfides connect cysteine 8–cysteine 25, cysteine 15–cysteine 27, and cysteine 21–cysteine 33.

Post-translationally, a cyclic succinimide probably forms by loss of water between Asp-4 and Gly-5, that can then rehydrate to either the original peptide bond or to a beta-aspartyl isopeptide bond. Three isoforms of MCoTI-II are detected, two with the parent molecular weight, corresponding to the unmodified and proposed isopeptide forms, and one with a molecular weight 18 Da lower, corresponding to a succinimide cross-linked form. In terms of processing, this is a cyclic peptide.

It localises to the secreted. Functionally, inhibits trypsin; probably participates in a plant defense mechanism. In Momordica cochinchinensis (Spiny bitter cucumber), this protein is Trypsin inhibitor 2.